The primary structure comprises 264 residues: Cell division protein FtsQ (264 aa).

Positions 1–24 (MAGPTTAERGARQQESSGPPRVRR) are disordered. The Cytoplasmic segment spans residues 1–32 (MAGPTTAERGARQQESSGPPRVRRFRPPRLRT). The chain crosses the membrane as a helical span at residues 33–53 (IIILAVALVLVAGGTVWVLYG). Residues 54-264 (SNWTRLERVS…VATAPASSGS (211 aa)) lie on the Extracellular side of the membrane. Residues 57–126 (TRLERVSVSG…HGIGLKVTER (70 aa)) enclose the POTRA domain.

Belongs to the FtsQ/DivIB family. FtsQ subfamily.

It localises to the cell membrane. Essential cell division protein. This chain is Cell division protein FtsQ, found in Streptomyces coelicolor (strain ATCC BAA-471 / A3(2) / M145).